The following is a 406-amino-acid chain: Peptidase T (406 aa).

His82 is a Zn(2+) binding site. Residue Asp84 is part of the active site. Residue Asp142 participates in Zn(2+) binding. The active-site Proton acceptor is the Glu176. Zn(2+) contacts are provided by Glu177, Asp199, and His381.

It belongs to the peptidase M20B family. Zn(2+) serves as cofactor.

It localises to the cytoplasm. The catalysed reaction is Release of the N-terminal residue from a tripeptide.. Functionally, cleaves the N-terminal amino acid of tripeptides. In Streptococcus agalactiae serotype V (strain ATCC BAA-611 / 2603 V/R), this protein is Peptidase T.